The chain runs to 416 residues: Trehalose synthase (416 aa).

It belongs to the glycosyltransferase group 1 family. Glycosyltransferase 4 subfamily. In terms of assembly, homodimer. Requires Mg(2+) as cofactor.

It carries out the reaction an NDP-alpha-D-glucose + D-glucose = alpha,alpha-trehalose + a ribonucleoside 5'-diphosphate + H(+). With respect to regulation, inhibited by 20 mM Fe(3+) and Mn(2+). Partially inhibited by Zn(2+) and Ni(2+). Activity is slightly enhanced by 2 mM Fe (3+), Mn (2+), Ca(2+) or Li(+) and by 20 mM Mg(2+), Ca(2+) or Li(+). Synthesizes trehalose from ADP-glucose and glucose. The reaction is reversible, the equilibrium strongly favors trehalose synthesis. The sequence is that of Trehalose synthase from Rubrobacter xylanophilus (strain DSM 9941 / JCM 11954 / NBRC 16129 / PRD-1).